The chain runs to 153 residues: Prefoldin subunit alpha (153 aa).

Positions 126–153 (KRLEQGYRQAPGGSPVPHRHDHEDHDEE) are disordered. Residues 143–153 (HRHDHEDHDEE) are compositionally biased toward basic and acidic residues.

The protein belongs to the prefoldin alpha subunit family. Heterohexamer of two alpha and four beta subunits.

The protein localises to the cytoplasm. Molecular chaperone capable of stabilizing a range of proteins. Seems to fulfill an ATP-independent, HSP70-like function in archaeal de novo protein folding. This is Prefoldin subunit alpha from Methanoregula boonei (strain DSM 21154 / JCM 14090 / 6A8).